A 313-amino-acid chain; its full sequence is tRNA dimethylallyltransferase (313 aa).

20–27 (GPTGTGKS) contributes to the ATP binding site. 22–27 (TGTGKS) lines the substrate pocket.

Belongs to the IPP transferase family. Monomer. The cofactor is Mg(2+).

The enzyme catalyses adenosine(37) in tRNA + dimethylallyl diphosphate = N(6)-dimethylallyladenosine(37) in tRNA + diphosphate. Functionally, catalyzes the transfer of a dimethylallyl group onto the adenine at position 37 in tRNAs that read codons beginning with uridine, leading to the formation of N6-(dimethylallyl)adenosine (i(6)A). The sequence is that of tRNA dimethylallyltransferase from Kocuria rhizophila (strain ATCC 9341 / DSM 348 / NBRC 103217 / DC2201).